A 299-amino-acid polypeptide reads, in one-letter code: Centriolar and ciliogenesis-associated protein HYLS1 (299 aa).

Residue Ser179 is modified to Phosphoserine.

This sequence belongs to the HYLS1 family.

The protein localises to the cytoplasm. The protein resides in the cell projection. It localises to the cilium. It is found in the cytoskeleton. Its subcellular location is the microtubule organizing center. The protein localises to the centrosome. The protein resides in the centriole. Plays a role in ciliogenesis. This Homo sapiens (Human) protein is Centriolar and ciliogenesis-associated protein HYLS1.